Reading from the N-terminus, the 103-residue chain is UPF0145 protein Rsph17025_2361 (103 aa).

It belongs to the UPF0145 family.

The polypeptide is UPF0145 protein Rsph17025_2361 (Cereibacter sphaeroides (strain ATCC 17025 / ATH 2.4.3) (Rhodobacter sphaeroides)).